Here is a 232-residue protein sequence, read N- to C-terminus: Octanoyltransferase (232 aa).

Residues 44–219 (EHTGDELWVV…QLARQFGLVL (176 aa)) form the BPL/LPL catalytic domain. Residues 83-90 (RGGQVTYH), 150-152 (ALG), and 163-165 (GLS) each bind substrate. Residue C181 is the Acyl-thioester intermediate of the active site.

This sequence belongs to the LipB family.

Its subcellular location is the cytoplasm. The catalysed reaction is octanoyl-[ACP] + L-lysyl-[protein] = N(6)-octanoyl-L-lysyl-[protein] + holo-[ACP] + H(+). It participates in protein modification; protein lipoylation via endogenous pathway; protein N(6)-(lipoyl)lysine from octanoyl-[acyl-carrier-protein]: step 1/2. Functionally, catalyzes the transfer of endogenously produced octanoic acid from octanoyl-acyl-carrier-protein onto the lipoyl domains of lipoate-dependent enzymes. Lipoyl-ACP can also act as a substrate although octanoyl-ACP is likely to be the physiological substrate. The sequence is that of Octanoyltransferase from Xanthomonas campestris pv. campestris (strain 8004).